The sequence spans 436 residues: Xylose isomerase (436 aa).

Mg(2+) is bound by residues Asp306 and Asp308.

It belongs to the xylose isomerase family. In terms of assembly, homotetramer. Mg(2+) is required as a cofactor.

Its subcellular location is the cytoplasm. It catalyses the reaction alpha-D-xylose = alpha-D-xylulofuranose. The sequence is that of Xylose isomerase from Rhizobium rhizogenes (strain K84 / ATCC BAA-868) (Agrobacterium radiobacter).